The primary structure comprises 298 residues: Ornithine carbamoyltransferase (298 aa).

Carbamoyl phosphate contacts are provided by residues Ser-50–Thr-53, Gln-77, Arg-101, and His-128–Gln-131. Residues Asn-159, Asp-216, and Ser-220 to Met-221 each bind L-ornithine. Residues Cys-256–Leu-257 and Arg-284 contribute to the carbamoyl phosphate site.

It belongs to the aspartate/ornithine carbamoyltransferase superfamily. OTCase family.

It localises to the cytoplasm. It catalyses the reaction carbamoyl phosphate + L-ornithine = L-citrulline + phosphate + H(+). The protein operates within amino-acid biosynthesis; L-arginine biosynthesis; L-arginine from L-ornithine and carbamoyl phosphate: step 1/3. Its function is as follows. Reversibly catalyzes the transfer of the carbamoyl group from carbamoyl phosphate (CP) to the N(epsilon) atom of ornithine (ORN) to produce L-citrulline. The protein is Ornithine carbamoyltransferase of Methylococcus capsulatus (strain ATCC 33009 / NCIMB 11132 / Bath).